Here is a 500-residue protein sequence, read N- to C-terminus: MLKRRLEFFFLYMMLIGAYVIWFFPVSRLEFYGGLLCYISIILFSIYSLILENRTSQHTLLWIHILVFFPIVGYVFYLFSGQLYVKGKLFKTKRMYNREKLRKLFDKEETPEVTGLKDNQERFFTYSIRAAHMNINTKSNIKVLKNGEETFPDIFKAMRKAESYIHIEYYMFKSDMLGRGMMDIMMEKARQGVEVRFLYDAAGSMKLARRDIMRMKQAGVDIVPFSPLKYGFFNQKLNFRNHRKIVIIDGKTGFVGGLNVGKEYISRDPYIGFWRDTHLRLEGEIVQTLHAIFMLDWEYVSNEVLIDQEEYNTPVPVEGGGIYQIVATGPDMKESMSDLYYEMISSAQKSIWIATPYFVPNESIRTALKAAATKGVEVRVMVPEKNDSFLTQYASRSYFPELLLEGIEVYSYQKGFMHQKVMIIDGDLASVGTANMDMRSFQLNFEVNVFFTDAEAIRTLEAHFEEDMQESEKLSPVGFYKRGVADRTKESFARLFSGVL.

Helical transmembrane passes span L6–V26, F31–L51, and T59–F79. PLD phosphodiesterase domains lie at L237–Y264 and Q413–S440. Active-site residues include H242, K244, D249, H418, K420, and D425.

Belongs to the phospholipase D family. Cardiolipin synthase subfamily.

The protein resides in the cell membrane. The enzyme catalyses 2 a 1,2-diacyl-sn-glycero-3-phospho-(1'-sn-glycerol) = a cardiolipin + glycerol. Its function is as follows. Catalyzes the reversible phosphatidyl group transfer from one phosphatidylglycerol molecule to another to form cardiolipin (CL) (diphosphatidylglycerol) and glycerol. May have a role in the heat shock response since the level of the transcript of ywiE increases after a heat shock. This is Probable cardiolipin synthase YwiE (ywiE) from Bacillus subtilis (strain 168).